Here is a 510-residue protein sequence, read N- to C-terminus: Arginine biosynthesis bifunctional protein ArgJ, chloroplastic (510 aa).

Residues T223, K249, E359, N505, and T510 each contribute to the substrate site.

This sequence belongs to the ArgJ family. In terms of assembly, heterodimer of an alpha and a beta chain.

Its subcellular location is the plastid. It is found in the chloroplast. The enzyme catalyses N(2)-acetyl-L-ornithine + L-glutamate = N-acetyl-L-glutamate + L-ornithine. The catalysed reaction is L-glutamate + acetyl-CoA = N-acetyl-L-glutamate + CoA + H(+). The protein operates within amino-acid biosynthesis; L-arginine biosynthesis; L-ornithine and N-acetyl-L-glutamate from L-glutamate and N(2)-acetyl-L-ornithine (cyclic): step 1/1. It participates in amino-acid biosynthesis; L-arginine biosynthesis; N(2)-acetyl-L-ornithine from L-glutamate: step 1/4. In terms of biological role, catalyzes two activities which are involved in the cyclic version of arginine biosynthesis: the synthesis of acetylglutamate from glutamate and acetyl-CoA, and of ornithine by transacetylation between acetylornithine and glutamate. This Vitis vinifera (Grape) protein is Arginine biosynthesis bifunctional protein ArgJ, chloroplastic.